A 103-amino-acid chain; its full sequence is Large ribosomal subunit protein bL21 (103 aa).

The protein belongs to the bacterial ribosomal protein bL21 family. Part of the 50S ribosomal subunit. Contacts protein L20.

Functionally, this protein binds to 23S rRNA in the presence of protein L20. This Psychrobacter arcticus (strain DSM 17307 / VKM B-2377 / 273-4) protein is Large ribosomal subunit protein bL21.